Consider the following 504-residue polypeptide: Xanthotoxol synthase (504 aa).

A helical membrane pass occupies residues 3 to 23 (PAAIFLILAIPIASVYLLFYH). Residues 363 to 368 (PGPLLI) form a substrate specificity region. Cys444 contributes to the heme binding site.

This sequence belongs to the cytochrome P450 family. Requires heme as cofactor.

The protein localises to the microsome membrane. The catalysed reaction is psoralen + reduced [NADPH--hemoprotein reductase] + O2 = xanthotoxol + oxidized [NADPH--hemoprotein reductase] + H2O + H(+). It carries out the reaction 6-methoxycoumarin + reduced [NADPH--hemoprotein reductase] + O2 = scopoletin + oxidized [NADPH--hemoprotein reductase] + H2O + H(+). It functions in the pathway secondary metabolite biosynthesis. Involved in the biosynthesis of coumarins and furanocoumarins (FCs), natural products required for defense responses against attacks by predators with potential medical and agroindustrial usages such as anticoagulant, rodenticide and artificial vanilla substitutes. Catalyzes the conversion of psoralen into xanthotoxol and of 6-methoxycoumarin into scopoletin. Can also convert with a lower efficiency scopoletin into fraxetin and 7-methoxycoumarin into daphnetin-7-methylether, and use 7-methoxy-3-methylcoumarin as substrate. This chain is Xanthotoxol synthase, found in Pastinaca sativa (Wild parsnip).